Reading from the N-terminus, the 428-residue chain is Glutamate-1-semialdehyde 2,1-aminomutase 1 (428 aa).

At lysine 267 the chain carries N6-(pyridoxal phosphate)lysine.

The protein belongs to the class-III pyridoxal-phosphate-dependent aminotransferase family. HemL subfamily. As to quaternary structure, homodimer. Pyridoxal 5'-phosphate is required as a cofactor.

It is found in the cytoplasm. The catalysed reaction is (S)-4-amino-5-oxopentanoate = 5-aminolevulinate. It functions in the pathway porphyrin-containing compound metabolism; protoporphyrin-IX biosynthesis; 5-aminolevulinate from L-glutamyl-tRNA(Glu): step 2/2. The protein is Glutamate-1-semialdehyde 2,1-aminomutase 1 (hemL1) of Staphylococcus aureus (strain NCTC 8325 / PS 47).